The primary structure comprises 194 residues: Cytochrome c oxidase assembly protein CtaG (194 aa).

Residues 1-12 are Cytoplasmic-facing; sequence MALRGPAKTVAQ. Residues 13 to 35 form a helical; Signal-anchor for type II membrane protein membrane-spanning segment; it reads TVSVVIFMGALAWASVPLYDWFC. Residues 36-194 are Periplasmic-facing; it reads RVTGFGGVTG…IEENSDTSLN (159 aa).

It belongs to the COX11/CtaG family.

The protein localises to the cell inner membrane. In terms of biological role, exerts its effect at some terminal stage of cytochrome c oxidase synthesis, probably by being involved in the insertion of the copper B into subunit I. The protein is Cytochrome c oxidase assembly protein CtaG of Roseobacter denitrificans (strain ATCC 33942 / OCh 114) (Erythrobacter sp. (strain OCh 114)).